Here is a 159-residue protein sequence, read N- to C-terminus: Phosphopantetheine adenylyltransferase (159 aa).

T9 lines the substrate pocket. ATP contacts are provided by residues 9–10 (TF) and H17. Substrate contacts are provided by K41, L73, and R87. Residues 88–90 (GLR), E98, and 123–129 (YSYISST) contribute to the ATP site.

Belongs to the bacterial CoaD family. As to quaternary structure, homohexamer. Mg(2+) is required as a cofactor.

The protein resides in the cytoplasm. It catalyses the reaction (R)-4'-phosphopantetheine + ATP + H(+) = 3'-dephospho-CoA + diphosphate. The protein operates within cofactor biosynthesis; coenzyme A biosynthesis; CoA from (R)-pantothenate: step 4/5. Functionally, reversibly transfers an adenylyl group from ATP to 4'-phosphopantetheine, yielding dephospho-CoA (dPCoA) and pyrophosphate. The protein is Phosphopantetheine adenylyltransferase of Azotobacter vinelandii (strain DJ / ATCC BAA-1303).